We begin with the raw amino-acid sequence, 405 residues long: MAAPGTVASVMASKTKTKKKHFVVQKVKLFRASDPLLSVLMWGVNHSINELSHVQIPVMLMPDDFKAYSKIKVDNHLFNKENMPSHFKFKEYCPMVFRNLRERFGIDDQDFQNSLTRSAPLANDSQARSGARFHTSYDKRYIIKTITSEDVAEMHNILKKYHQFIVECHGNTLLPQFLGMYRLTVDGVEIYMIVTRNVFSHRLSVYRKYDLKGSTVAREASDKEKAKELPTFKDNDFINDGQKIHIDENNKRMFLEKLKKDVEFLAQLKLMDYSLLVGIHDVERAEQEEVECEENDGEDEGESDGTHPIGTPPDSPGNTLNSSLPLAPGEFDPAIDVYGIKSHESAPRKEVYFMAIIDILTHYDAKKKAAHAAKTVKHGAGAEISTVNPEQYSKRFLDFIANILT.

One can recognise a PIPK domain in the interval 32-404 (ASDPLLSVLM…RFLDFIANIL (373 aa)). Positions 287-326 (QEEVECEENDGEDEGESDGTHPIGTPPDSPGNTLNSSLPL) are disordered. Residues 288–303 (EEVECEENDGEDEGES) show a composition bias toward acidic residues.

In terms of assembly, homodimer. In terms of processing, phosphorylated in tyrosines. Phosphorylation is induced by light and increases kinase activity.

It localises to the cell membrane. The protein localises to the nucleus. Its subcellular location is the lysosome. It is found in the cytoplasm. It catalyses the reaction a 1,2-diacyl-sn-glycero-3-phospho-(1D-myo-inositol-5-phosphate) + ATP = a 1,2-diacyl-sn-glycero-3-phospho-(1D-myo-inositol-4,5-bisphosphate) + ADP + H(+). The enzyme catalyses 1,2-dihexadecanoyl-sn-glycero-3-phospho-(1D-myo-inositol-5-phosphate) + ATP = 1,2-dihexadecanoyl-sn-glycero-3-phospho-(1D-myo-inositol-4,5-bisphosphate) + ADP + H(+). It carries out the reaction 1,2-dihexadecanoyl-sn-glycero-3-phospho-(1D-myo-inositol-5-phosphate) + GTP = 1,2-dihexadecanoyl-sn-glycero-3-phospho-(1D-myo-inositol-4,5-bisphosphate) + GDP + H(+). With respect to regulation, in rod outer segments, activated by light. Its function is as follows. Catalyzes the phosphorylation of phosphatidylinositol 5-phosphate (PtdIns5P) on the fourth hydroxyl of the myo-inositol ring, to form phosphatidylinositol 4,5-bisphosphate (PtdIns(4,5)P2). Has both ATP- and GTP-dependent kinase activities. This Gallus gallus (Chicken) protein is Phosphatidylinositol 5-phosphate 4-kinase type-2 alpha (PIP4K2A).